A 247-amino-acid chain; its full sequence is (7aS)-7a-methyl-1,5-dioxo-2,3,5,6,7,7a-hexahydro-1H-indene-carboxyl-CoA hydrolase (247 aa).

This sequence belongs to the enoyl-CoA hydratase/isomerase family.

The enzyme catalyses (7aS)-7a-methyl-1,5-dioxo-2,3,5,6,7,7a-hexahydro-1H-indene-carboxyl-CoA + H2O = (3E)-2-(2-carboxylatoethyl)-3-methyl-6-oxocyclohex-1-ene-1-carboxyl-CoA + H(+). The protein operates within steroid metabolism; cholesterol degradation. In terms of biological role, involved in the final steps of cholesterol and steroid degradation. Catalyzes the hydrolytic ring D opening of (7aS)-7a-methyl-1,5-dioxo-2,3,5,6,7,7a-hexahydro-1H-indene-carboxyl-CoA (HIEC-CoA) to (3E)-2-(2-carboxylatoethyl)-3-methyl-6-oxocyclohex-1-ene-1-carboxyl-CoA (COCHEA-CoA). This chain is (7aS)-7a-methyl-1,5-dioxo-2,3,5,6,7,7a-hexahydro-1H-indene-carboxyl-CoA hydrolase, found in Mycobacterium tuberculosis (strain ATCC 25618 / H37Rv).